The primary structure comprises 330 residues: Syntaxin-121 (330 aa).

The segment covering 1–10 (MNNLFSSSWK) has biased composition (polar residues). Residues 1 to 39 (MNNLFSSSWKRTGGGGGGDGDIESGGGVEMAPPPGAAAG) are disordered. Topologically, residues 1 to 284 (MNNLFSSSWK…RKHQKSTRKW (284 aa)) are cytoplasmic. Over residues 12–28 (TGGGGGGDGDIESGGGV) the composition is skewed to gly residues. Residues 212–274 (VAEIQERHGA…DRGREQLVVA (63 aa)) enclose the t-SNARE coiled-coil homology domain. The chain crosses the membrane as a helical; Anchor for type IV membrane protein span at residues 285–305 (TCIAIIILLVLILVVVLPIVL). Over 306-330 (KFVNNNKSSSSSPAPATPSPPPPTA) the chain is Vesicular. The segment at 311–330 (NKSSSSSPAPATPSPPPPTA) is disordered. Residues 320–330 (PATPSPPPPTA) are compositionally biased toward pro residues.

This sequence belongs to the syntaxin family. Interacts with SNAP32. Expressed in roots, stems, leaf blades and leaf sheaths.

The protein resides in the cell membrane. Its function is as follows. Vesicle trafficking protein that functions in the secretory pathway. Involved in plant defense by mediating host resistance to the rice blast fungus Magnaporthe oryzae. The interaction with SNAP32 may contribute to host resistance to the rice blast fungus. The sequence is that of Syntaxin-121 from Oryza sativa subsp. japonica (Rice).